We begin with the raw amino-acid sequence, 154 residues long: Transcriptional repressor NrdR (154 aa).

A zinc finger spans residues 3–34 (CPFCSAHDTKVIDSRLVAEGDQVRRRRECQAC). Positions 49-139 (PRVIKQDGSR…VYRRFQDLNE (91 aa)) constitute an ATP-cone domain.

It belongs to the NrdR family. Requires Zn(2+) as cofactor.

Its function is as follows. Negatively regulates transcription of bacterial ribonucleotide reductase nrd genes and operons by binding to NrdR-boxes. This chain is Transcriptional repressor NrdR, found in Azotobacter vinelandii (strain DJ / ATCC BAA-1303).